The following is a 257-amino-acid chain: Sad1-interacting factor 1 (257 aa).

The disordered stretch occupies residues 16-68 (LNKIKQGGASRINQILGQNSDDSQSDVRATASEEAVHSETATPVTPMSSGFME). Polar residues-rich tracts occupy residues 26–37 (RINQILGQNSDD) and 54–63 (ETATPVTPMS). Position 35 is a phosphoserine (Ser-35). Ser-132 carries the post-translational modification Phosphoserine. Thr-134 carries the phosphothreonine modification. The next 2 membrane-spanning stretches (helical) occupy residues 160–180 (LLAI…LLPW) and 231–251 (FTQL…CCYF).

In terms of assembly, interacts with kms1 and sad1.

It localises to the membrane. This chain is Sad1-interacting factor 1 (sif1), found in Schizosaccharomyces pombe (strain 972 / ATCC 24843) (Fission yeast).